Here is a 471-residue protein sequence, read N- to C-terminus: Glutamate--tRNA ligase (471 aa).

Residues 9–19 (PSPTGYLHVGG) carry the 'HIGH' region motif. Cysteine 98, cysteine 100, cysteine 125, and histidine 127 together coordinate Zn(2+). The 'KMSKS' region signature appears at 237-241 (KLSKR). Residue lysine 240 participates in ATP binding.

It belongs to the class-I aminoacyl-tRNA synthetase family. Glutamate--tRNA ligase type 1 subfamily. Monomer. Zn(2+) is required as a cofactor.

It is found in the cytoplasm. The enzyme catalyses tRNA(Glu) + L-glutamate + ATP = L-glutamyl-tRNA(Glu) + AMP + diphosphate. Its function is as follows. Catalyzes the attachment of glutamate to tRNA(Glu) in a two-step reaction: glutamate is first activated by ATP to form Glu-AMP and then transferred to the acceptor end of tRNA(Glu). This is Glutamate--tRNA ligase from Salmonella schwarzengrund (strain CVM19633).